A 222-amino-acid chain; its full sequence is Vacuolar protein sorting-associated protein 2 homolog 2 (222 aa).

Coiled-coil stretches lie at residues 26-83 and 143-222; these read RGIE…AQIR and SEAI…LRRI. The tract at residues 179–222 is disordered; it reads SSAPKGRIATKTAAPPASTAATNKNSESSEVDELEKRLASLRRI. The span at 187 to 203 shows a compositional bias: low complexity; sequence ATKTAAPPASTAATNKN.

This sequence belongs to the SNF7 family. Component of the endosomal sorting required for transport complex III (ESCRT-III), composed at least of VPS2, VPS20, VPS24 and VPS32. Interacts with CHMP1A, CHMP1B and VPS60-1.

It is found in the endosome. In terms of biological role, component of the ESCRT-III complex, which is required for multivesicular bodies (MVBs) formation and sorting of endosomal cargo proteins into MVBs. The ESCRT-III complex is probably involved in the concentration of MVB cargo. The protein is Vacuolar protein sorting-associated protein 2 homolog 2 (VPS2.2) of Arabidopsis thaliana (Mouse-ear cress).